The sequence spans 542 residues: Ribonuclease Y (542 aa).

A helical transmembrane segment spans residues 1-21; the sequence is MLIALIAVSVLAVAAIIGSLA. The interval 52 to 92 is disordered; that stretch reads SRASQDLADSRKDVAKARAELESSRTRASDEARRADNADQA. Basic and acidic residues predominate over residues 59 to 92; that stretch reads ADSRKDVAKARAELESSRTRASDEARRADNADQA. The region spanning 229–289 is the KH domain; the sequence is VVSVVPLPSN…MRREVARQAL (61 aa). One can recognise an HD domain in the interval 355-449; that stretch reads VLDHCVECAR…VKAADAISAA (95 aa).

This sequence belongs to the RNase Y family.

Its subcellular location is the cell membrane. In terms of biological role, endoribonuclease that initiates mRNA decay. The polypeptide is Ribonuclease Y (Cutibacterium acnes (strain DSM 16379 / KPA171202) (Propionibacterium acnes)).